We begin with the raw amino-acid sequence, 594 residues long: Adenine deaminase 1 (594 aa).

Belongs to the metallo-dependent hydrolases superfamily. Adenine deaminase family. Mn(2+) serves as cofactor.

It catalyses the reaction adenine + H2O + H(+) = hypoxanthine + NH4(+). This chain is Adenine deaminase 1, found in Latilactobacillus sakei subsp. sakei (strain 23K) (Lactobacillus sakei subsp. sakei).